The following is a 146-amino-acid chain: Hemoglobin subunit beta (146 aa).

The Globin domain occupies 2 to 146; it reads QWSAEEKQLI…VAHALARKYH (145 aa). Heme b-binding residues include His63 and His92.

It belongs to the globin family. Heterotetramer of two alpha chains and two beta chains. Red blood cells.

Its function is as follows. Involved in oxygen transport from the lung to the various peripheral tissues. The protein is Hemoglobin subunit beta (HBB) of Struthio camelus (Common ostrich).